Consider the following 953-residue polypeptide: 26S proteasome non-ATPase regulatory subunit 1 (953 aa).

M1 carries the N-acetylmethionine modification. A Phosphothreonine modification is found at T273. The segment at 277-319 (SVPGSTNTGTVPGPEKDSDSMETEEKTAGAVAGKTPDASPEPK) is disordered. The segment covering 290–303 (PEKDSDSMETEEKT) has biased composition (basic and acidic residues). The residue at position 310 (K310) is an N6-acetyllysine. T311 bears the Phosphothreonine mark. S315 is modified (phosphoserine). 10 PC repeats span residues 403–436 (TATA…PGSA), 441–474 (GGLY…DIVR), 476–510 (GGSL…VTGE), 511–545 (AAGL…EKIL), 547–580 (GLAV…ILRR), 581–616 (SGMY…DVRR), 617–649 (AAVE…PHVR), 651–685 (GAAM…YVRQ), 686–726 (GALI…DVMA), and 729–761 (GAIL…PSVV). K720 carries the N6-acetyllysine modification. The residue at position 830 (T830) is a Phosphothreonine. A Phosphoserine modification is found at S834. Disordered regions lie at residues 839 to 881 (AKKK…LDNP) and 930 to 953 (AHGP…YIDD). Composition is skewed to basic and acidic residues over residues 842–852 (KEKEKEKKEEE) and 859–872 (AEKK…KEPE). Positions 936-953 (EEEEQEPEPPEPFEYIDD) are enriched in acidic residues.

Belongs to the proteasome subunit S1 family. In terms of assembly, component of the 19S proteasome regulatory particle complex. The 26S proteasome consists of a 20S core particle (CP) and two 19S regulatory subunits (RP). The regulatory particle is made of a lid composed of 9 subunits, a base containing 6 ATPases and few additional components including PSMD1. Interacts with ADRM1. Interacts with ZFAND1.

Component of the 26S proteasome, a multiprotein complex involved in the ATP-dependent degradation of ubiquitinated proteins. This complex plays a key role in the maintenance of protein homeostasis by removing misfolded or damaged proteins, which could impair cellular functions, and by removing proteins whose functions are no longer required. Therefore, the proteasome participates in numerous cellular processes, including cell cycle progression, apoptosis, or DNA damage repair. This Rattus norvegicus (Rat) protein is 26S proteasome non-ATPase regulatory subunit 1 (Psmd1).